A 272-amino-acid chain; its full sequence is Small ribosomal subunit protein mS23 (272 aa).

Positions 236 to 272 are disordered; sequence AGATGGAKEESDPAILPELEVAESTSESAQPAEIRTG.

It belongs to the mitochondrion-specific ribosomal protein mS23 family. In terms of assembly, component of the mitochondrial small ribosomal subunit.

The protein localises to the mitochondrion. The chain is Small ribosomal subunit protein mS23 (RSM25) from Coccidioides immitis (strain RS) (Valley fever fungus).